We begin with the raw amino-acid sequence, 472 residues long: Uronate isomerase (472 aa).

Belongs to the metallo-dependent hydrolases superfamily. Uronate isomerase family.

The catalysed reaction is D-glucuronate = D-fructuronate. It catalyses the reaction aldehydo-D-galacturonate = keto-D-tagaturonate. The protein operates within carbohydrate metabolism; pentose and glucuronate interconversion. The chain is Uronate isomerase from Xanthomonas oryzae pv. oryzae (strain MAFF 311018).